The chain runs to 192 residues: Probable nicotinate-nucleotide adenylyltransferase (192 aa).

It belongs to the NadD family.

The catalysed reaction is nicotinate beta-D-ribonucleotide + ATP + H(+) = deamido-NAD(+) + diphosphate. It functions in the pathway cofactor biosynthesis; NAD(+) biosynthesis; deamido-NAD(+) from nicotinate D-ribonucleotide: step 1/1. In terms of biological role, catalyzes the reversible adenylation of nicotinate mononucleotide (NaMN) to nicotinic acid adenine dinucleotide (NaAD). This chain is Probable nicotinate-nucleotide adenylyltransferase, found in Rhizobium etli (strain ATCC 51251 / DSM 11541 / JCM 21823 / NBRC 15573 / CFN 42).